Reading from the N-terminus, the 436-residue chain is Phaseolin, alpha-type (436 aa).

The N-terminal stretch at 1–24 (MMRARVPLLLLGILFLASLSASFA) is a signal peptide. A disordered region spans residues 233–257 (LSKHAKSSSRKSHSKQDNTIGNEFG). A compositionally biased stretch (basic residues) spans 236-245 (HAKSSSRKSH). The region spanning 245–396 (HSKQDNTIGN…TFSGSGEEVM (152 aa)) is the Cupin type-1 domain. The N-linked (GlcNAc...) (complex) asparagine; alternate glycan is linked to N258. N-linked (GlcNAc...) (high mannose) asparagine; alternate glycosylation is present at N258. N-linked (GlcNAc...) (high mannose) asparagine glycosylation occurs at N347. Residues 411 to 436 (HHHQQEQQKGSHQQEQQKGRKGAFVY) form a disordered region. Positions 417–426 (QQKGSHQQEQ) are enriched in low complexity.

It belongs to the 7S seed storage protein family. In terms of assembly, homotrimer. Post-translationally, N-glycosylated; glycans consist in Man9(GlcNAc)2 and Man7(GlcNAc)2 when dually glycosylated at Asn-258 and Asn-347, whereas it consists in Xyl-Man3(GlcNAc)2 when solely glycosylated at Asn-258.

The protein localises to the vacuole. Its subcellular location is the aleurone grain. Functionally, major seed storage protein. The chain is Phaseolin, alpha-type from Phaseolus vulgaris (Kidney bean).